Reading from the N-terminus, the 86-residue chain is Small ribosomal subunit protein bS20 (86 aa).

It belongs to the bacterial ribosomal protein bS20 family.

Functionally, binds directly to 16S ribosomal RNA. In Kineococcus radiotolerans (strain ATCC BAA-149 / DSM 14245 / SRS30216), this protein is Small ribosomal subunit protein bS20.